A 78-amino-acid polypeptide reads, in one-letter code: uncharacterized protein (78 aa).

A disordered region spans residues 1–28 (MGGGNAQKSAMARAKNLEKAKAAGKGSQ).

This is an uncharacterized protein from Arabidopsis thaliana (Mouse-ear cress).